Consider the following 89-residue polypeptide: DNA/RNA-binding protein Alba 2 (89 aa).

This sequence belongs to the histone-like Alba family. As to quaternary structure, forms homodimers and homotetramers. Interacts with Alba 1.

Its subcellular location is the cytoplasm. The protein resides in the chromosome. Functionally, binds double-stranded DNA tightly but without sequence specificity. Involved in DNA compaction. This Archaeoglobus fulgidus (strain ATCC 49558 / DSM 4304 / JCM 9628 / NBRC 100126 / VC-16) protein is DNA/RNA-binding protein Alba 2.